The sequence spans 454 residues: Bifunctional protein GlmU (454 aa).

The pyrophosphorylase stretch occupies residues 1-232 (MTDRTCLSIV…VDNVIGINNR (232 aa)). UDP-N-acetyl-alpha-D-glucosamine is bound by residues 11-14 (LAAG), K25, Q78, and 83-84 (GT). D108 lines the Mg(2+) pocket. UDP-N-acetyl-alpha-D-glucosamine contacts are provided by G144, E158, N173, and N230. N230 is a Mg(2+) binding site. The linker stretch occupies residues 233 to 253 (AELAEAETIWQNRKRRELMLS). An N-acetyltransferase region spans residues 254-454 (GVTLIAPETV…AIKAAKSVSK (201 aa)). Residues R319 and K337 each coordinate UDP-N-acetyl-alpha-D-glucosamine. H349 (proton acceptor) is an active-site residue. Residues Y352 and N363 each contribute to the UDP-N-acetyl-alpha-D-glucosamine site. Acetyl-CoA is bound by residues A366, 372-373 (NY), S391, S409, and R426.

This sequence in the N-terminal section; belongs to the N-acetylglucosamine-1-phosphate uridyltransferase family. In the C-terminal section; belongs to the transferase hexapeptide repeat family. Homotrimer. Mg(2+) serves as cofactor.

It localises to the cytoplasm. The enzyme catalyses alpha-D-glucosamine 1-phosphate + acetyl-CoA = N-acetyl-alpha-D-glucosamine 1-phosphate + CoA + H(+). The catalysed reaction is N-acetyl-alpha-D-glucosamine 1-phosphate + UTP + H(+) = UDP-N-acetyl-alpha-D-glucosamine + diphosphate. It participates in nucleotide-sugar biosynthesis; UDP-N-acetyl-alpha-D-glucosamine biosynthesis; N-acetyl-alpha-D-glucosamine 1-phosphate from alpha-D-glucosamine 6-phosphate (route II): step 2/2. The protein operates within nucleotide-sugar biosynthesis; UDP-N-acetyl-alpha-D-glucosamine biosynthesis; UDP-N-acetyl-alpha-D-glucosamine from N-acetyl-alpha-D-glucosamine 1-phosphate: step 1/1. Its pathway is bacterial outer membrane biogenesis; LPS lipid A biosynthesis. Its function is as follows. Catalyzes the last two sequential reactions in the de novo biosynthetic pathway for UDP-N-acetylglucosamine (UDP-GlcNAc). The C-terminal domain catalyzes the transfer of acetyl group from acetyl coenzyme A to glucosamine-1-phosphate (GlcN-1-P) to produce N-acetylglucosamine-1-phosphate (GlcNAc-1-P), which is converted into UDP-GlcNAc by the transfer of uridine 5-monophosphate (from uridine 5-triphosphate), a reaction catalyzed by the N-terminal domain. The sequence is that of Bifunctional protein GlmU from Brucella melitensis biotype 1 (strain ATCC 23456 / CCUG 17765 / NCTC 10094 / 16M).